Consider the following 63-residue polypeptide: Large ribosomal subunit protein uL30 (63 aa).

Belongs to the universal ribosomal protein uL30 family. As to quaternary structure, part of the 50S ribosomal subunit.

This chain is Large ribosomal subunit protein uL30, found in Caulobacter sp. (strain K31).